The following is a 121-amino-acid chain: Small ribosomal subunit protein uS13 (121 aa).

The tract at residues 94–121 (GLPVRGQKTRNNAHTVKGKPKAIAGKKK) is disordered. A compositionally biased stretch (basic residues) spans 109 to 121 (VKGKPKAIAGKKK).

The protein belongs to the universal ribosomal protein uS13 family. Part of the 30S ribosomal subunit. Forms a loose heterodimer with protein S19. Forms two bridges to the 50S subunit in the 70S ribosome.

In terms of biological role, located at the top of the head of the 30S subunit, it contacts several helices of the 16S rRNA. In the 70S ribosome it contacts the 23S rRNA (bridge B1a) and protein L5 of the 50S subunit (bridge B1b), connecting the 2 subunits; these bridges are implicated in subunit movement. Contacts the tRNAs in the A and P-sites. In Onion yellows phytoplasma (strain OY-M), this protein is Small ribosomal subunit protein uS13.